A 260-amino-acid chain; its full sequence is MGRSPCCEKAHTNRGAWTKEEDERLVAYVRAHGEGCWRSLPRAAGLLRCGKSCRLRWINYLRPDLKRGNFTADEDDLIVKLHSLLGNKWSLIAARLPGRTDNEIKNYWNTHIRRKLLGSGIDPVTHRRVAGGAATTISFQPSPNTAVAAAAETAAQAPIKAEETAAVKAPRCPDLNLDLCISPPCQHEDDGEEEEEELDLIKPAVVKREALQAGHGHGHGLCLGCGLGGQKGAAGCSCSNGHHFLGLRTSVLDFRGLEMK.

2 HTH myb-type domains span residues Lys9–Leu61 and Arg62–Leu116. DNA-binding regions (H-T-H motif) lie at residues Trp37 to Leu61 and Trp89 to Ile112.

As to expression, mainly expressed in the aerial parts and, to a lower extent, in roots.

The protein resides in the nucleus. Its function is as follows. Transcription factor that negatively regulates the expression of caffeic acid O-methyl-transferase genes (COMTs) and of other genes involved in the biosynthesis of lignin, thus preventing lignification. This Zea mays (Maize) protein is Myb transcription factor 42.